Reading from the N-terminus, the 375-residue chain is Succinyl-diaminopimelate desuccinylase (375 aa).

His-66 provides a ligand contact to Zn(2+). Residue Asp-68 is part of the active site. A Zn(2+)-binding site is contributed by Asp-99. Glu-133 functions as the Proton acceptor in the catalytic mechanism. Zn(2+) contacts are provided by Glu-134, Glu-162, and His-348.

Belongs to the peptidase M20A family. DapE subfamily. Homodimer. Zn(2+) serves as cofactor. Requires Co(2+) as cofactor.

The enzyme catalyses N-succinyl-(2S,6S)-2,6-diaminopimelate + H2O = (2S,6S)-2,6-diaminopimelate + succinate. The protein operates within amino-acid biosynthesis; L-lysine biosynthesis via DAP pathway; LL-2,6-diaminopimelate from (S)-tetrahydrodipicolinate (succinylase route): step 3/3. In terms of biological role, catalyzes the hydrolysis of N-succinyl-L,L-diaminopimelic acid (SDAP), forming succinate and LL-2,6-diaminopimelate (DAP), an intermediate involved in the bacterial biosynthesis of lysine and meso-diaminopimelic acid, an essential component of bacterial cell walls. The protein is Succinyl-diaminopimelate desuccinylase of Escherichia coli O6:K15:H31 (strain 536 / UPEC).